Consider the following 138-residue polypeptide: MKKKEQSLDIISLPIELDRTKIESRYRLALIAAQRAAELSLGATAKIDKKGKKVTTTALLEILSNKIDYITGEEAVKAKEKIDQIDVKKLLEDKRKAIPDLSELEKDLKVYLHGKESAEKMLEDLFTEGESNSSNEQE.

It belongs to the RNA polymerase subunit omega family. The RNAP catalytic core consists of 2 alpha, 1 beta, 1 beta' and 1 omega subunit. When a sigma factor is associated with the core the holoenzyme is formed, which can initiate transcription.

It carries out the reaction RNA(n) + a ribonucleoside 5'-triphosphate = RNA(n+1) + diphosphate. Its function is as follows. Promotes RNA polymerase assembly. Latches the N- and C-terminal regions of the beta' subunit thereby facilitating its interaction with the beta and alpha subunits. The chain is DNA-directed RNA polymerase subunit omega from Thermodesulfovibrio yellowstonii (strain ATCC 51303 / DSM 11347 / YP87).